Here is a 363-residue protein sequence, read N- to C-terminus: D-alanine--D-alanine ligase (363 aa).

Residues lysine 148 to glutamate 353 form the ATP-grasp domain. Arginine 176–glutamate 231 is an ATP binding site. The Mg(2+) site is built by aspartate 308, glutamate 320, and asparagine 322.

The protein belongs to the D-alanine--D-alanine ligase family. Requires Mg(2+) as cofactor. It depends on Mn(2+) as a cofactor.

Its subcellular location is the cytoplasm. It catalyses the reaction 2 D-alanine + ATP = D-alanyl-D-alanine + ADP + phosphate + H(+). It functions in the pathway cell wall biogenesis; peptidoglycan biosynthesis. Functionally, cell wall formation. In Nocardia farcinica (strain IFM 10152), this protein is D-alanine--D-alanine ligase.